The sequence spans 64 residues: Large ribosomal subunit protein bL28 (64 aa).

Positions 1–27 are disordered; that stretch reads MAKRDQLTGKGPLSGNTRSHAMNHSKR.

Belongs to the bacterial ribosomal protein bL28 family.

The protein is Large ribosomal subunit protein bL28 of Ureaplasma parvum serovar 3 (strain ATCC 27815 / 27 / NCTC 11736).